We begin with the raw amino-acid sequence, 454 residues long: UPF0210 protein BLA_0552 (454 aa).

It belongs to the UPF0210 family. As to quaternary structure, homodimer.

The protein is UPF0210 protein BLA_0552 of Bifidobacterium animalis subsp. lactis (strain AD011).